The following is a 283-amino-acid chain: Pantothenate synthetase (283 aa).

An ATP-binding site is contributed by 26–33 (MGNLHEGH). His33 acts as the Proton donor in catalysis. A (R)-pantoate-binding site is contributed by Gln57. Residue Gln57 participates in beta-alanine binding. 144-147 (GKKD) contacts ATP. Position 150 (Gln150) interacts with (R)-pantoate. ATP is bound by residues Val173 and 181–184 (LSSR).

The protein belongs to the pantothenate synthetase family. As to quaternary structure, homodimer.

Its subcellular location is the cytoplasm. It carries out the reaction (R)-pantoate + beta-alanine + ATP = (R)-pantothenate + AMP + diphosphate + H(+). Its pathway is cofactor biosynthesis; (R)-pantothenate biosynthesis; (R)-pantothenate from (R)-pantoate and beta-alanine: step 1/1. Catalyzes the condensation of pantoate with beta-alanine in an ATP-dependent reaction via a pantoyl-adenylate intermediate. This Ralstonia nicotianae (strain ATCC BAA-1114 / GMI1000) (Ralstonia solanacearum) protein is Pantothenate synthetase.